The sequence spans 151 residues: Histone H2B.1 (151 aa).

2 stretches are compositionally biased toward basic and acidic residues: residues 1 to 28 (MAPK…EKAP) and 36 to 51 (EKRL…GEGK). The interval 1 to 58 (MAPKAEKKPAAKKPAEEEPATEKVEKAPAGKKPKAEKRLPAGKSKEGGEGKKGKKKAK) is disordered. N6-acetyllysine is present on residues Lys-7 and Lys-37. Lys-147 is covalently cross-linked (Glycyl lysine isopeptide (Lys-Gly) (interchain with G-Cter in ubiquitin)).

This sequence belongs to the histone H2B family. The nucleosome is a histone octamer containing two molecules each of H2A, H2B, H3 and H4 assembled in one H3-H4 heterotetramer and two H2A-H2B heterodimers. The octamer wraps approximately 147 bp of DNA. Post-translationally, can be acetylated to form H2BK6ac and H2BK33ac. In terms of processing, monoubiquitinated to form H2BK143ub1; may give a specific tag for epigenetic transcriptional activation.

The protein resides in the nucleus. Its subcellular location is the chromosome. Core component of nucleosome. Nucleosomes wrap and compact DNA into chromatin, limiting DNA accessibility to the cellular machineries which require DNA as a template. Histones thereby play a central role in transcription regulation, DNA repair, DNA replication and chromosomal stability. DNA accessibility is regulated via a complex set of post-translational modifications of histones, also called histone code, and nucleosome remodeling. In Zea mays (Maize), this protein is Histone H2B.1.